A 331-amino-acid chain; its full sequence is Phosphate acyltransferase (331 aa).

Belongs to the PlsX family. As to quaternary structure, homodimer. Probably interacts with PlsY.

Its subcellular location is the cytoplasm. The enzyme catalyses a fatty acyl-[ACP] + phosphate = an acyl phosphate + holo-[ACP]. Its pathway is lipid metabolism; phospholipid metabolism. Its function is as follows. Catalyzes the reversible formation of acyl-phosphate (acyl-PO(4)) from acyl-[acyl-carrier-protein] (acyl-ACP). This enzyme utilizes acyl-ACP as fatty acyl donor, but not acyl-CoA. The protein is Phosphate acyltransferase of Exiguobacterium sibiricum (strain DSM 17290 / CCUG 55495 / CIP 109462 / JCM 13490 / 255-15).